A 309-amino-acid polypeptide reads, in one-letter code: Taste receptor type 2 member 8 (309 aa).

At 1–7 (MFSPADN) the chain is on the extracellular side. Residues 8 to 28 (IFIILITGEFILGILGNGYIA) form a helical membrane-spanning segment. Residues 29-50 (LVNWIDWIKKKKISTVDYILTN) lie on the Cytoplasmic side of the membrane. A helical transmembrane segment spans residues 51–71 (LVIARICLISVMVVNGIVIVL). Topologically, residues 72-82 (NPDVYTKNKQQ) are extracellular. The chain crosses the membrane as a helical span at residues 83–103 (IVIFTFWTFANYLNMWITTCL). The Cytoplasmic segment spans residues 104-131 (NVFYFLKIASSSHPLFLWLKWKIDMVVH). A helical transmembrane segment spans residues 132–152 (WILLGCFAISLLVSLIAAIVL). Over 153-184 (SCDYRFHAIAKHKRNITEMFHVSKXPYFEPLT) the chain is Extracellular. Asparagine 167 carries N-linked (GlcNAc...) asparagine glycosylation. The chain crosses the membrane as a helical span at residues 185-205 (LFNLFAIVPFIVSLISFFLLV). Over 206–239 (RSLWRHTKQIKLYATGSRDPSTEVHVRAIKTMTS) the chain is Cytoplasmic. Residues 240-260 (FIFFFFLYFISSILMTFSYLM) traverse the membrane as a helical segment. Topologically, residues 261-266 (TKYKLA) are extracellular. A helical transmembrane segment spans residues 267-287 (VEFGEIAAILYPLGHSLILIV). Topologically, residues 288–309 (LNNKLRQIFVRMLTCRKIACVI) are cytoplasmic.

This sequence belongs to the G-protein coupled receptor T2R family.

Its subcellular location is the membrane. Functionally, receptor that may play a role in the perception of bitterness and is gustducin-linked. May play a role in sensing the chemical composition of the gastrointestinal content. The activity of this receptor may stimulate alpha gustducin, mediate PLC-beta-2 activation and lead to the gating of TRPM5. The polypeptide is Taste receptor type 2 member 8 (TAS2R8) (Pan paniscus (Pygmy chimpanzee)).